An 879-amino-acid chain; its full sequence is Autophagy-related protein 9 (879 aa).

Residues 1–56 are disordered; sequence MGKGEGYLDPTILSVASGSRNSGKGKERTRRKGGHKYHSLHVQDEEEEEPPESDAL. A compositionally biased stretch (basic residues) spans 27 to 39; the sequence is ERTRRKGGHKYHS. The chain crosses the membrane as a helical span at residues 104 to 124; that stretch reads VLNLLTTFFVIAFSTFLISCI. 2 N-linked (GlcNAc...) asparagine glycosylation sites follow: asparagine 163 and asparagine 166. Residues 180-200 traverse the membrane as a helical segment; that stretch reads LFLIILSAFFIFQVASFAMSV. An intramembrane segment occupies 385-405; the sequence is FIFMGILNAIFAPFIILYLLI. Helical transmembrane passes span 455–475 and 488–508; these read FVAF…LIDP and TVLF…GMVP. Residues 555-575 lie within the membrane without spanning it; that stretch reads IMIFFSELLSVILTPFILFFS. Disordered stretches follow at residues 620 to 666 and 763 to 825; these read ETGL…DWRG and WAKS…EEER. Over residues 632–657 the composition is skewed to low complexity; it reads GPAADGFAAGKPSRPTTRRTTSSSPS. Positions 798–817 are enriched in basic and acidic residues; that stretch reads EGDKGDDSIDGWSKRVKTDG.

The protein belongs to the ATG9 family. Homotrimer; forms a homotrimer with a central pore that forms a path between the two membrane leaflets. Phosphorylated by ATG1. ATG1 phosphorylation is required for preautophagosome elongation.

It localises to the preautophagosomal structure membrane. The protein localises to the cytoplasmic vesicle membrane. Its subcellular location is the golgi apparatus membrane. The protein resides in the endoplasmic reticulum membrane. The catalysed reaction is a 1,2-diacyl-sn-glycero-3-phosphocholine(in) = a 1,2-diacyl-sn-glycero-3-phosphocholine(out). It catalyses the reaction a 1,2-diacyl-sn-glycero-3-phospho-L-serine(in) = a 1,2-diacyl-sn-glycero-3-phospho-L-serine(out). It carries out the reaction a 1,2-diacyl-sn-glycero-3-phosphoethanolamine(in) = a 1,2-diacyl-sn-glycero-3-phosphoethanolamine(out). The enzyme catalyses a 1,2-diacyl-sn-glycero-3-phospho-(1D-myo-inositol-3-phosphate)(in) = a 1,2-diacyl-sn-glycero-3-phospho-(1D-myo-inositol-3-phosphate)(out). Phospholipid scramblase involved in autophagy and cytoplasm to vacuole transport (Cvt) vesicle formation. Cycles between the preautophagosomal structure/phagophore assembly site (PAS) and the cytoplasmic vesicle pool and supplies membrane for the growing autophagosome. Lipid scramblase activity plays a key role in preautophagosomal structure/phagophore assembly by distributing the phospholipids that arrive through ATG2 from the cytoplasmic to the luminal leaflet of the bilayer, thereby driving autophagosomal membrane expansion. Required for mitophagy. Also involved in endoplasmic reticulum-specific autophagic process and is essential for the survival of cells subjected to severe ER stress. Different machineries are required for anterograde trafficking to the PAS during either the Cvt pathway or bulk autophagy and for retrograde trafficking. The polypeptide is Autophagy-related protein 9 (ATG9) (Cryptococcus neoformans var. neoformans serotype D (strain B-3501A) (Filobasidiella neoformans)).